A 212-amino-acid chain; its full sequence is Uridine kinase (212 aa).

Position 13–20 (13–20) interacts with ATP; the sequence is GGSGSGKT.

This sequence belongs to the uridine kinase family.

The protein localises to the cytoplasm. It catalyses the reaction uridine + ATP = UMP + ADP + H(+). The enzyme catalyses cytidine + ATP = CMP + ADP + H(+). The protein operates within pyrimidine metabolism; CTP biosynthesis via salvage pathway; CTP from cytidine: step 1/3. It participates in pyrimidine metabolism; UMP biosynthesis via salvage pathway; UMP from uridine: step 1/1. This chain is Uridine kinase, found in Bacillus thuringiensis (strain Al Hakam).